A 448-amino-acid chain; its full sequence is Cysteine--tRNA ligase (448 aa).

Cys27 lines the Zn(2+) pocket. The 'HIGH' region signature appears at 29-39; the sequence is PTVYNYIHVGN. 3 residues coordinate Zn(2+): Cys210, His235, and Glu239. The 'KMSKS' region motif lies at 267–271; it reads KMSKS. Lys270 lines the ATP pocket.

This sequence belongs to the class-I aminoacyl-tRNA synthetase family. Monomer. Zn(2+) serves as cofactor.

Its subcellular location is the cytoplasm. It carries out the reaction tRNA(Cys) + L-cysteine + ATP = L-cysteinyl-tRNA(Cys) + AMP + diphosphate. This is Cysteine--tRNA ligase from Lactococcus lactis subsp. cremoris (strain MG1363).